We begin with the raw amino-acid sequence, 549 residues long: Cation/acetate symporter ActP (549 aa).

The next 13 membrane-spanning stretches (helical) occupy residues 33–53, 77–97, 103–123, 148–168, 183–203, 206–226, 262–282, 303–323, 355–375, 404–424, 428–448, 464–484, and 493–513; these read WQAI…TYWA, LAIA…ALVF, GLIY…LIAE, ILSA…QMVG, IAVV…GMLA, WVQI…AFMV, ISAL…PHIL, GFMG…IMLV, LFLG…VAGL, VSKI…VLFE, IAFM…PIIL, GGWL…TIWV, and IFPY…GIWF.

This sequence belongs to the sodium:solute symporter (SSF) (TC 2.A.21) family.

Its subcellular location is the cell inner membrane. Transports acetate. This chain is Cation/acetate symporter ActP, found in Citrobacter koseri (strain ATCC BAA-895 / CDC 4225-83 / SGSC4696).